A 247-amino-acid polypeptide reads, in one-letter code: Diglucosylglycerate octanoyltransferase (247 aa).

It belongs to the OctT acyltransferase family. Homotetramer.

It carries out the reaction (2R)-2-O-[alpha-D-glucopyranosyl-(1-&gt;6)-alpha-D-glucopyranosyl]-glycerate + octanoyl-CoA = (2R)-2-O-[6-O-octanoyl-alpha-D-glucopyranosyl-(1-&gt;6)-alpha-D-glucopyranosyl]-glycerate + CoA. Its function is as follows. Sugar octanoyltransferase likely involved in the biosynthesis of mycobacterial methylglucose lipopolysaccharide (MGLP). Catalyzes the transfer of an octanoyl group from octanoyl-CoA to the C6 OH of the second glucose in diglucosylglycerate (DGG). DGG is the preferred acceptor, but to a lesser extent, GG (glucosylglycerate) can also be used as substrate. DGG and GG are the two earliest intermediates in MGLP biosynthesis. This is Diglucosylglycerate octanoyltransferase from Mycobacterium tuberculosis (strain ATCC 25618 / H37Rv).